A 111-amino-acid polypeptide reads, in one-letter code: Flagellar hook-basal body complex protein FliE (111 aa).

Belongs to the FliE family.

It localises to the bacterial flagellum basal body. This is Flagellar hook-basal body complex protein FliE from Brucella abortus (strain S19).